The chain runs to 206 residues: uncharacterized protein (206 aa).

Positions 128–206 are disordered; sequence KRYNVQKPKV…DQSWLDELLR (79 aa). Residues 171–181 show a composition bias toward polar residues; sequence YISSNHSSMHI.

Its subcellular location is the cytoplasm. The protein resides in the nucleus. This is an uncharacterized protein from Schizosaccharomyces pombe (strain 972 / ATCC 24843) (Fission yeast).